Here is a 699-residue protein sequence, read N- to C-terminus: MTAIRGGSRRAPGLALALLGGVLLGACHGDENAQVNALPGFVSGSVRKTAYDGASDDLLTAGLGKTGLGSDTRPGFANPAQPSAAELRRLAIYSNYRALVDITPNGGYGRFWGPNVDLAGNDTLGEGKIAGTEYLAYSDDGSGRKNVTLLVQVPASFDPANPCIVTATASGSRGVYGAIAAAGEWGLKRGCAVAYNDKGGGNGAHEIGTGVVTLIDGTLATASSAGSSSLFTASESSSTLAAFNSAFPNRYAYKHAHSQQNPEQDWGLVTLQAVEFAYWALNEQFGPVVDGTRHGIRYRPGDITTIAASVSNGGGSALAAAEQDTRGWITAVVVGEPQINVRMTPGVTVEQGGAPVPSFGRPLADYATLANLLQPCAAAAVAATGAPYLSALPMGVTQSIRTQRCATLAAAGLVSGADTASQASDALAQLYAAGYLADSDLLQAPMWDSQAMPAIAVTYANAYTRSRVTDNLCNFSFATTNPVTGAVAAPAVSPMTNLFGAGNGVPPTNGINLVFNGASGGVDHRLATPDASFAGAFCLRQLWTANQLGIGTNVDAVRVAANLQHKPAIIVHGRSDALVPVNHASRAYVAQNSATEGRASQLSFYEVTNGQHFDAFLSVPGFDTRFVPVHYYDEQALNLMWNHLKSGAPLPPSQVIRTVPRGGVPGAAPALSTANLPPIVQSPGANAIAVNAGVIDVPL.

The signal sequence occupies residues 1-33 (MTAIRGGSRRAPGLALALLGGVLLGACHGDENA). The Charge relay system role is filled by Ser311.

Belongs to the D-(-)-3-hydroxybutyrate oligomer hydrolase family.

It is found in the secreted. The enzyme catalyses (3R)-hydroxybutanoate dimer + H2O = 2 (R)-3-hydroxybutanoate + H(+). It participates in lipid metabolism; butanoate metabolism. Functionally, participates in the degradation of poly-3-hydroxybutyrate (PHB). It works downstream of poly(3-hydroxybutyrate) depolymerase, hydrolyzing D(-)-3-hydroxybutyrate oligomers of various length (3HB-oligomers) into 3HB-monomers. The protein is D-(-)-3-hydroxybutyrate oligomer hydrolase of Burkholderia mallei (strain NCTC 10247).